A 109-amino-acid chain; its full sequence is Mannose-specific lectin (109 aa).

The region spanning 1–109 (DNILYSSEVL…PPIWATGTGR (109 aa)) is the Bulb-type lectin domain. An intrachain disulfide couples Cys-29 to Cys-52. The propeptide occupies 79-82 (TGTN).

In terms of assembly, homotrimer or homotetramer.

The protein resides in the secreted. In terms of biological role, mannose-specific lectin. Shows agglutinating activity toward rabbit erythrocytes and mitogenic activity towards mouse lymphocytes. This chain is Mannose-specific lectin, found in Aloe arborescens (Kidachi aloe).